Here is a 311-residue protein sequence, read N- to C-terminus: MQENQQITKKEQYNLNKLQKRLRRNVGEAIADFNMIEEGDRIMVCLSGGKDSYTMLEILRNLQQSAPINFSLVAVNLDQKQPGFPEHVLPEYLEKLGVEYKIVEENTYGIVKEKIPEGKTTCSLCSRLRRGILYRTATELGATKIALGHHRDDILQTLFLNMFYGGKMKGMPPKLMSDDGKHIVIRPLAYCREKDIQRFADAKAFPIIPCNLCGSQPNLQRQVIADMLRDWDKRYPGRIETMFSAMQNVVPSHLCDTNLFDFKGITHGSEVVNGGDLAFDREEIPLQPAGWQPEEDENQLDELRLNVVEVK.

The short motif at Ser-47–Ser-52 is the PP-loop motif element. 3 residues coordinate [4Fe-4S] cluster: Cys-122, Cys-125, and Cys-213.

It belongs to the TtcA family. As to quaternary structure, homodimer. Mg(2+) is required as a cofactor. [4Fe-4S] cluster serves as cofactor.

It is found in the cytoplasm. It carries out the reaction cytidine(32) in tRNA + S-sulfanyl-L-cysteinyl-[cysteine desulfurase] + AH2 + ATP = 2-thiocytidine(32) in tRNA + L-cysteinyl-[cysteine desulfurase] + A + AMP + diphosphate + H(+). The protein operates within tRNA modification. Functionally, catalyzes the ATP-dependent 2-thiolation of cytidine in position 32 of tRNA, to form 2-thiocytidine (s(2)C32). The sulfur atoms are provided by the cysteine/cysteine desulfurase (IscS) system. The protein is tRNA-cytidine(32) 2-sulfurtransferase of Escherichia coli O157:H7.